The primary structure comprises 707 residues: MEHAYQYSWIIPFVPLPIPILIGIGLLLFPTATKNLRRMWAFPNILLLSIVMIFSIDLSIQQINGSYIYQYVWSWTINNDFSFEFGYFIDSLTSIMSILITTVGIFVLIYSDNYMSHDQGYLRFFAYMSLFNTSMLGLVTSSNLIQIYIFWELVGMCSYLLIGFWFTRPAAANACQKAFVTNRIGDFGLLLGILGFYWITGSFEFQXLFEIFNNLIYNNEVHLLFVTLCASLLFAGAVAKSAQFPLHVWLPDAMXGPTPISALIHAATMVATGIFLVARLLPLFIVIPYIMNLISLIGIITVLLGATLPLAQKXIKRGLAYSTMSQLGYMMLALGMGSYRAALFHLITHAYSKALLFLGSGSIIHSMEAVVGYSPEKSQNMVLMGGLRKHAPITQIAFLIGTLSLCGIPPLACFWSKDEILSDSWLYSPIFAIIAWSTAGLTAFYMFRIYLLTFEGHLNIYFQKYSGKKSSSFYSIKLWGKEEQKMINRNFRLFPLLTMNKNEKPYTIGGNVKKRALITNFGYKEAFSYPHESDNTMLFPMLILVLFTLFVGAIAIPLNQEGMHLDILSKLXXPSINXLHKNSNDFEDSYQFLTNATFSVSIAGFGIFTAFLLYKPFYSSLLNLNLLNSFSKKGPKRIFLDKIIYLIYDWSYXRGYIDTFYSISLTKGIRGLAELTHFFDRRVIDGITNGVGITSFFVGEGIKYXGG.

The next 15 helical transmembrane spans lie at 9 to 29, 40 to 60, 89 to 109, 125 to 145, 147 to 167, 184 to 204, 219 to 239, 258 to 278, 280 to 300, 327 to 347, 354 to 374, 396 to 416, 425 to 445, 538 to 558, and 592 to 612; these read WIIP…LLLF, WAFP…DLSI, IDSL…FVLI, FAYM…SNLI, IYIF…FWFT, IGDF…GSFE, NEVH…GAVA, TPIS…FLVA, LLPL…IGII, LGYM…FHLI, ALLF…VGYS, IAFL…CFWS, WLYS…TAFY, LFPM…AIPL, and FLTN…TAFL.

It belongs to the complex I subunit 5 family. As to quaternary structure, NDH is composed of at least 16 different subunits, 5 of which are encoded in the nucleus.

It localises to the plastid. The protein resides in the chloroplast thylakoid membrane. It catalyses the reaction a plastoquinone + NADH + (n+1) H(+)(in) = a plastoquinol + NAD(+) + n H(+)(out). It carries out the reaction a plastoquinone + NADPH + (n+1) H(+)(in) = a plastoquinol + NADP(+) + n H(+)(out). Functionally, NDH shuttles electrons from NAD(P)H:plastoquinone, via FMN and iron-sulfur (Fe-S) centers, to quinones in the photosynthetic chain and possibly in a chloroplast respiratory chain. The immediate electron acceptor for the enzyme in this species is believed to be plastoquinone. Couples the redox reaction to proton translocation, and thus conserves the redox energy in a proton gradient. The sequence is that of NAD(P)H-quinone oxidoreductase subunit 5, chloroplastic (ndhF) from Malvaviscus arboreus (Turk's cap).